The primary structure comprises 596 residues: Histone deacetylase 9 (596 aa).

Composition is skewed to basic and acidic residues over residues 132-153 (REKE…HRQE) and 160-172 (RSKD…AVAS). Disordered stretches follow at residues 132 to 172 (REKE…AVAS), 214 to 258 (HTSL…VRSR), 293 to 313 (SSVS…GPVA), and 522 to 596 (QPEG…QQVT). The segment at 172–222 (STEVKQKLQEFILSKSATKEPLTNGTSHSMGRHPKLWYTAAHHTSLDQSSP) is interaction with mef2. Residues 221-237 (SPPPSGTSPTYKCPPPG) show a composition bias toward pro residues. Over residues 293 to 312 (SSVSSSSPVSGPSSPNNGPV) the composition is skewed to low complexity. The segment covering 522–536 (QPEGHLEEAEEDLHG) has biased composition (basic and acidic residues). Residues 541–558 (QEKSSSIDNTRSYSSTDL) are compositionally biased toward polar residues. The span at 567–585 (KVKEEPPDSENEIKTHLQS) shows a compositional bias: basic and acidic residues. The segment covering 586-596 (EQKSVFAQQVT) has biased composition (polar residues).

This sequence belongs to the histone deacetylase family. HD type 2 subfamily. Homodimer. Interacts with mef2. In terms of tissue distribution, broadly expressed.

It is found in the nucleus. It catalyses the reaction N(6)-acetyl-L-lysyl-[histone] + H2O = L-lysyl-[histone] + acetate. Functionally, devoided of intrinsic deacetylase activity, promotes the deacetylation of lysine residues on the N-terminal part of the core histones (H2A, H2B, H3 and H4) by recruiting other histone deacetylases. Histone deacetylation gives a tag for epigenetic repression and plays an important role in transcriptional regulation, cell cycle progression and developmental events. Represses MEF2-dependent transcription. This Xenopus laevis (African clawed frog) protein is Histone deacetylase 9 (hdac9).